Reading from the N-terminus, the 146-residue chain is MAGPLRAPLLLLAILAVALALSPAAGASPGRTPRLLGGPMDASVEEEGVRRALDFAVSEYNKASNDMYHSRALQVVRARKQIVAGVNYFLDVEMGRTTCTKNQPNLDNCPFHEQPHLKRKAFCSFQIYSVPWQGIMTLSKSTCQDA.

Positions Met-1–Gly-26 are cleaved as a signal peptide. At Ser-43 the chain carries Phosphoserine. A Secondary area of contact motif is present at residues Gln-81–Gly-85. Intrachain disulfides connect Cys-99-Cys-109 and Cys-123-Cys-143.

It belongs to the cystatin family.

Its subcellular location is the secreted. Functionally, as an inhibitor of cysteine proteinases, this protein is thought to serve an important physiological role as a local regulator of this enzyme activity. The polypeptide is Cystatin-C (CST3) (Saimiri sciureus (Common squirrel monkey)).